Reading from the N-terminus, the 174-residue chain is Repair DNA polymerase X (174 aa).

The tract at residues 42–51 is involved in ssDNA binding; sequence REEKMLNDVD. Mg(2+) is bound by residues aspartate 49 and aspartate 51. Cysteine 81 and cysteine 86 are joined by a disulfide. Aspartate 100 is a Mg(2+) binding site.

It belongs to the DNA polymerase type-X family. The cofactor is Mg(2+).

The protein resides in the virion. It carries out the reaction DNA(n) + a 2'-deoxyribonucleoside 5'-triphosphate = DNA(n+1) + diphosphate. In terms of biological role, error-prone polymerase lacking a proofreading 3'-5' exonuclease which catalyzes the gap-filling reaction during the DNA repair process. Specifically binds intermediates in the single-nucleotide base-excision repair process. Also catalyzes DNA polymerization with low nucleotide-insertion fidelity. Probably acts as a strategic DNA mutase, which gives rise to a rapid emergence of variants. Generates mismatched G-G pairs, in that case, the polymerase first binds the deoxynucleotide followed by mismatch formation. Together with the viral DNA ligase, fills the single nucleotide gaps generated by the AP endonuclease. Binds DNA with high affinity via the helix alphaE. The polypeptide is Repair DNA polymerase X (Ornithodoros (relapsing fever ticks)).